Reading from the N-terminus, the 226-residue chain is Protein-L-isoaspartate O-methyltransferase (226 aa).

Ser75 is a catalytic residue.

It belongs to the methyltransferase superfamily. L-isoaspartyl/D-aspartyl protein methyltransferase family.

Its subcellular location is the cytoplasm. It carries out the reaction [protein]-L-isoaspartate + S-adenosyl-L-methionine = [protein]-L-isoaspartate alpha-methyl ester + S-adenosyl-L-homocysteine. Its function is as follows. Catalyzes the methyl esterification of L-isoaspartyl residues in peptides and proteins that result from spontaneous decomposition of normal L-aspartyl and L-asparaginyl residues. It plays a role in the repair and/or degradation of damaged proteins. The sequence is that of Protein-L-isoaspartate O-methyltransferase from Lawsonia intracellularis (strain PHE/MN1-00).